A 358-amino-acid polypeptide reads, in one-letter code: N-acylethanolamine-hydrolyzing acid amidase (358 aa).

Residues 1-26 (MQGTGHPVRPVLELLLLLLLLAGVGG) form the signal peptide. N-linked (GlcNAc...) asparagine glycans are attached at residues Asn39 and Asn108. Cys127 acts as the Nucleophile in catalysis. N-linked (GlcNAc...) asparagine glycans are attached at residues Asn310, Asn334, and Asn356.

It belongs to the acid ceramidase family. In terms of assembly, heterodimer of an alpha and a beta subunit, produced by autocatalytic cleavage. N-glycosylated. Tunicamycin treatment causes a reduction in specific activity against N-palmitoylethanolamine. Post-translationally, autoproteolytic cleavage at pH 4.5 gives rise to the alpha and beta subunit. Cleavage gives rise to a conformation change that activates the enzyme. The same catalytic Cys residue mediates the autoproteolytic cleavage and subsequent hydrolysis of lipid substrates.

It localises to the lysosome. The protein localises to the membrane. It carries out the reaction N-hexadecanoylethanolamine + H2O = ethanolamine + hexadecanoate. It catalyses the reaction an N-(long-chain fatty acyl)ethanolamine + H2O = a long-chain fatty acid + ethanolamine. The catalysed reaction is N-dodecanoylethanolamine + H2O = dodecanoate + ethanolamine. The enzyme catalyses N-tetradecanoylethanolamine + H2O = tetradecanoate + ethanolamine. It carries out the reaction an N-acylsphing-4-enine + H2O = sphing-4-enine + a fatty acid. It catalyses the reaction N-hexadecanoylsphing-4-enine + H2O = sphing-4-enine + hexadecanoate. The catalysed reaction is N-dodecanoylsphing-4-enine + H2O = dodecanoate + sphing-4-enine. The protein operates within lipid metabolism; fatty acid metabolism. Functionally, degrades bioactive fatty acid amides to their corresponding acids, with the following preference: N-palmitoylethanolamine &gt; N-myristoylethanolamine &gt; N-stearoylethanolamine &gt; N-oleoylethanolamine &gt; N-linoleoylethanolamine &gt; N-arachidonoylethanolamine. The sequence is that of N-acylethanolamine-hydrolyzing acid amidase from Oryctolagus cuniculus (Rabbit).